A 175-amino-acid polypeptide reads, in one-letter code: Putative lipoprotein LppN (175 aa).

The N-terminal stretch at 1–20 (MRLPGRHVLYALSAVTMLAA) is a signal peptide. Cysteine 21 is lipidated: N-palmitoyl cysteine. Residue cysteine 21 is the site of S-diacylglycerol cysteine attachment. Positions 31 to 56 (ASTNMNPTNPPATAETATVSPTPAPQ) are disordered. The segment covering 33–48 (TNMNPTNPPATAETAT) has biased composition (low complexity). Prevents bacterial uptake by a human macrophage-like cell line stretches follow at residues 61-80 (ETWI…PADL), 101-120 (RAPV…DCAA), and 121-140 (GFAP…VAYL).

The protein resides in the cell membrane. It localises to the cell surface. In terms of biological role, probably involved in bacterial recognition and uptake by its host (human). The polypeptide is Putative lipoprotein LppN (lppN) (Mycobacterium tuberculosis (strain ATCC 25618 / H37Rv)).